The sequence spans 338 residues: GTP 3',8-cyclase (338 aa).

In terms of domain architecture, Radical SAM core spans 8-227 (KLQRPLKDLR…DMIHQVMPLE (220 aa)). Arginine 17 is a GTP binding site. Cysteine 24 and cysteine 28 together coordinate [4Fe-4S] cluster. Tyrosine 30 is a binding site for S-adenosyl-L-methionine. Position 31 (cysteine 31) interacts with [4Fe-4S] cluster. Arginine 71 is a GTP binding site. Glycine 75 contacts S-adenosyl-L-methionine. Threonine 102 provides a ligand contact to GTP. Position 126 (serine 126) interacts with S-adenosyl-L-methionine. Lysine 163 provides a ligand contact to GTP. Residue methionine 197 coordinates S-adenosyl-L-methionine. [4Fe-4S] cluster is bound by residues cysteine 261 and cysteine 264. Residue 266-268 (RAR) coordinates GTP. Cysteine 278 provides a ligand contact to [4Fe-4S] cluster.

This sequence belongs to the radical SAM superfamily. MoaA family. Monomer and homodimer. [4Fe-4S] cluster is required as a cofactor.

The catalysed reaction is GTP + AH2 + S-adenosyl-L-methionine = (8S)-3',8-cyclo-7,8-dihydroguanosine 5'-triphosphate + 5'-deoxyadenosine + L-methionine + A + H(+). Its pathway is cofactor biosynthesis; molybdopterin biosynthesis. Its function is as follows. Catalyzes the cyclization of GTP to (8S)-3',8-cyclo-7,8-dihydroguanosine 5'-triphosphate. This chain is GTP 3',8-cyclase, found in Bacillus anthracis (strain CDC 684 / NRRL 3495).